Here is a 657-residue protein sequence, read N- to C-terminus: Matrix metalloproteinase-15 (657 aa).

Positions 1–36 (MGSDRSALGRPGCTGSCLSSRASLLPLLLVLLDCLG) are cleaved as a signal peptide. A propeptide spanning residues 37-127 (HGTASKDAEV…KANLRRRRKR (91 aa)) is cleaved from the precursor. Positions 105–112 (PRCGVPDQ) match the Cysteine switch motif. C107 contributes to the Zn(2+) binding site. The Extracellular portion of the chain corresponds to 128–614 (YTLTGKAWNN…MEEVVRTVNV (487 aa)). N-linked (GlcNAc...) asparagine glycosylation is present at N146. Residue H255 participates in Zn(2+) binding. E256 is a catalytic residue. Residues H259 and H265 each coordinate Zn(2+). The segment at 295–365 (IQQLYGSPDG…ERPDQYGPNI (71 aa)) is disordered. Pro residues predominate over residues 328–337 (PRPPQPPHPG). Hemopexin repeat units lie at residues 363–411 (PNIC…WRGL), 412–457 (PGNI…GTDI), 459–507 (YDRI…QGIP), and 508–555 (TSPK…FMGC). A disulfide bridge links C366 with C555. A glycan (N-linked (GlcNAc...) asparagine) is linked at N414. The segment at 561–599 (PRSRWPDVARPPFNPNGGAEPEADGDSKEENAGDKDEGS) is disordered. Basic and acidic residues predominate over residues 585-599 (GDSKEENAGDKDEGS). A helical transmembrane segment spans residues 615–635 (VMVLVPLLLLLCILGLAFALV). Residues 636 to 657 (QMQRKGAPRMLLYCKRSLQEWV) are Cytoplasmic-facing.

Belongs to the peptidase M10A family. Zn(2+) is required as a cofactor. It depends on Ca(2+) as a cofactor. The precursor is cleaved by a furin endopeptidase.

It is found in the membrane. In terms of biological role, endopeptidase that degrades various components of the extracellular matrix. May activate progelatinase A. The polypeptide is Matrix metalloproteinase-15 (Mmp15) (Mus musculus (Mouse)).